A 255-amino-acid polypeptide reads, in one-letter code: Coenzyme F420:L-glutamate ligase (255 aa).

GTP contacts are provided by residues 11–14, 40–41, and Lys-45; these read IPLI and ST. Asp-109 lines the a divalent metal cation pocket. Position 112 (Asn-112) interacts with GTP. A divalent metal cation contacts are provided by Asp-150, Thr-151, and Glu-208. Residue 206-213 coordinates GTP; it reads MGEGAGGT.

This sequence belongs to the CofE family. As to quaternary structure, homodimer. Mg(2+) serves as cofactor. Mn(2+) is required as a cofactor. The cofactor is K(+).

The enzyme catalyses oxidized coenzyme F420-0 + GTP + L-glutamate = oxidized coenzyme F420-1 + GDP + phosphate + H(+). It catalyses the reaction oxidized coenzyme F420-1 + GTP + L-glutamate = oxidized coenzyme F420-2 + GDP + phosphate + H(+). Its pathway is cofactor biosynthesis; coenzyme F420 biosynthesis. In terms of biological role, catalyzes the GTP-dependent successive addition of two or more gamma-linked L-glutamates to the L-lactyl phosphodiester of 7,8-didemethyl-8-hydroxy-5-deazariboflavin (F420-0) to form coenzyme F420-0-glutamyl-glutamate (F420-2) or polyglutamated F420 derivatives. This chain is Coenzyme F420:L-glutamate ligase, found in Methanosarcina barkeri (strain Fusaro / DSM 804).